The primary structure comprises 115 residues: MEAKIQFIKGLDEKVLPDVRLTRSRDGSTGTATFRFKNPNILDKSTAKEGEITGMYLIDQEGTLETRDVNAQFINGKPEAIESIYIMKSPEAWDRFMRFMERYGESNGLVFTKAS.

Belongs to the Psb28 family. In terms of assembly, part of the photosystem II complex.

The protein localises to the plastid. It is found in the chloroplast thylakoid membrane. The polypeptide is Photosystem II reaction center Psb28 protein (Trieres chinensis (Marine centric diatom)).